The following is a 54-amino-acid chain: Small, acid-soluble spore protein gamma-type (54 aa).

Positions 1–54 (MAKKNRNKQQQEMQQQQQQHQAEFANEFAEGSSAEQARQQQQKAAGKRQKKNQQ) are disordered. Low complexity-rich tracts occupy residues 10 to 21 (QQEMQQQQQQHQ) and 29 to 44 (AEGSSAEQARQQQQKA). The span at 45-54 (AGKRQKKNQQ) shows a compositional bias: basic residues.

This sequence belongs to the gamma-type SASP family.

Functionally, SASP are proteins degraded in the first minutes of spore germination and provide amino acids for both new protein synthesis and metabolism. These proteins may be involved in dormant spore's high resistance to UV light. The protein is Small, acid-soluble spore protein gamma-type (sspA) of Alkalihalophilus pseudofirmus (strain ATCC BAA-2126 / JCM 17055 / OF4) (Bacillus pseudofirmus).